We begin with the raw amino-acid sequence, 514 residues long: Sugar transport protein 4 (514 aa).

Residues 1–22 are Cytoplasmic-facing; it reads MAGGFVSQTPGVRNYNYKLTPK. Transmembrane regions (helical) follow at residues 23 to 43, 80 to 100, 117 to 137, 140 to 160, 172 to 192, 202 to 222, 283 to 303, 321 to 341, 348 to 368, 387 to 407, 426 to 446, and 451 to 471; these read VFVTCFIGAFGGLIFGYDLGI, LLTLFTSSLYVAALVSSLFAS, FTFFIGSAFNGFAQNIAMLLI, ILLGFGVGFANQSVPVYLSEM, GFQVAIIFGIVVATIINYFTA, ISLGLACVPAVMIMIGALILP, LIMTCFIPFFQQLTGINVITF, LSAMVTGIIELLCTFVSVFTV, ILFLQGGIQMLVSQIAIGAMI, LIVALICIYVAGFAWSWGPLG, INVSVNMFFTFLVAQLFLTML, and FGLFFFFAFFVVIMTIFIYLM. Residues 472 to 514 lie on the Cytoplasmic side of the membrane; it reads LPETKNVPIEEMNRVWKAHWFWGKFIPDEAVNMGAAEMQQKSV.

Belongs to the major facilitator superfamily. Sugar transporter (TC 2.A.1.1) family. In terms of tissue distribution, mostly in flowers and roots, especially in anthers, including pollen, and root tips. Also present in some hydathodes.

The protein resides in the cell membrane. Mediates an active uptake of hexoses, probably by sugar/hydrogen symport. Can transport glucose, methylglucose, galactose, xylose and mannose, but not fructose. This is Sugar transport protein 4 (STP4) from Arabidopsis thaliana (Mouse-ear cress).